We begin with the raw amino-acid sequence, 145 residues long: Peroxide operon regulator (145 aa).

The DNA-binding stretch occupies residues 1 to 78; that stretch reads MAAHELKEAL…SGLVKELTYG (78 aa). Zn(2+)-binding residues include cysteine 96, cysteine 99, cysteine 136, and cysteine 139.

The protein belongs to the Fur family. As to quaternary structure, homodimer. The cofactor is Mn(2+). It depends on Fe(2+) as a cofactor. Requires Zn(2+) as cofactor. Post-translationally, possibly oxidized on a cysteine residue; the Cys-SOH formed in response to oxidative signaling may rapidly react with a Cys-SH to form a disulfide bond, leading to the loss of metal ion and inactivation of repressor function. Oxidized PerR can be further reduced by thiol reductants and repressor activity restored.

Its subcellular location is the cytoplasm. Its function is as follows. Hydrogen and organic peroxide sensor. Represses the expression of a regulon of peroxide-inducible genes such as katA, ahpC, ahpF, the heme biosynthesis operon (hemAXCDBL), fur, perR, zosA and mrgA. This Bacillus subtilis (strain 168) protein is Peroxide operon regulator (perR).